We begin with the raw amino-acid sequence, 147 residues long: Secreted RxLR effector protein BLN04 (147 aa).

A signal peptide spans 1-23 (MATMRRICFLFVFNLAVATSTQG). The dEER signature appears at 58–61 (SEER). The helical transmembrane segment at 117–137 (VYIYTILFLSIPIILGVAMYI) threads the bilayer.

It belongs to the RxLR effector family. In terms of assembly, interacts with host transcription factor NAC069.

The protein resides in the secreted. It localises to the host membrane. In terms of biological role, secreted effector that inhibits stress-induced relocalization of the transcription factor NAC069 to the nucleus, thus affecting its broad role in abiotic and biotic stress responses. In Bremia lactucae (Lettuce downy mildew), this protein is Secreted RxLR effector protein BLN04.